The sequence spans 152 residues: NADH-ubiquinone oxidoreductase chain 4 (152 aa).

4 helical membrane-spanning segments follow: residues Phe2–Leu22, Ile43–Pro63, Ile84–Phe104, and Met128–Leu148.

It belongs to the complex I subunit 4 family.

The protein localises to the mitochondrion membrane. It carries out the reaction a ubiquinone + NADH + 5 H(+)(in) = a ubiquinol + NAD(+) + 4 H(+)(out). Core subunit of the mitochondrial membrane respiratory chain NADH dehydrogenase (Complex I) that is believed to belong to the minimal assembly required for catalysis. Complex I functions in the transfer of electrons from NADH to the respiratory chain. The immediate electron acceptor for the enzyme is believed to be ubiquinone. The sequence is that of NADH-ubiquinone oxidoreductase chain 4 (MT-ND4) from Macaca fascicularis (Crab-eating macaque).